We begin with the raw amino-acid sequence, 81 residues long: MSYYGSYYGGLGYGCGGFGGLGYGYGCGCGSFRRLGSGCGYGGYGYGSGFGGYGYGSGFGGYGYGCYRPSYYGGYGFSGFY.

Belongs to the KRTAP type 19 family. Interacts with hair keratins.

In terms of biological role, in the hair cortex, hair keratin intermediate filaments are embedded in an interfilamentous matrix, consisting of hair keratin-associated proteins (KRTAP), which are essential for the formation of a rigid and resistant hair shaft through their extensive disulfide bond cross-linking with abundant cysteine residues of hair keratins. The matrix proteins include the high-sulfur and high-glycine-tyrosine keratins. This chain is Keratin-associated protein 19-3 (KRTAP19-3), found in Homo sapiens (Human).